A 206-amino-acid chain; its full sequence is LexA repressor (206 aa).

A DNA-binding region (H-T-H motif) is located at residues 28 to 48; it reads RAEIASELGFKSANAAEEHLK. Active-site for autocatalytic cleavage activity residues include Ser122 and Lys160.

This sequence belongs to the peptidase S24 family. Homodimer.

It catalyses the reaction Hydrolysis of Ala-|-Gly bond in repressor LexA.. Represses a number of genes involved in the response to DNA damage (SOS response), including recA and lexA. In the presence of single-stranded DNA, RecA interacts with LexA causing an autocatalytic cleavage which disrupts the DNA-binding part of LexA, leading to derepression of the SOS regulon and eventually DNA repair. This chain is LexA repressor, found in Tolumonas auensis (strain DSM 9187 / NBRC 110442 / TA 4).